Consider the following 504-residue polypeptide: L-amino-acid oxidase (504 aa).

An N-terminal signal peptide occupies residues 1 to 18; it reads MNVFFMFSLLFLAALGSC. An intrachain disulfide couples cysteine 28 to cysteine 191. FAD-binding positions include 61 to 62, 81 to 82, arginine 89, and 105 to 108; these read MS, EA, and GPMR. Arginine 108 contacts substrate. Asparagine 190 carries an N-linked (GlcNAc...) asparagine glycan. Substrate is bound at residue histidine 241. Valine 279 contributes to the FAD binding site. An intrachain disulfide couples cysteine 349 to cysteine 430. Asparagine 379 carries an N-linked (GlcNAc...) asparagine glycan. Tyrosine 390 provides a ligand contact to substrate. Residues glutamate 475 and 482–487 contribute to the FAD site; that span reads GWIDST. 482 to 483 provides a ligand contact to substrate; the sequence is GW.

The protein belongs to the flavin monoamine oxidase family. FIG1 subfamily. As to quaternary structure, homodimer; non-covalently linked. The cofactor is FAD. Expressed by the venom gland.

It localises to the secreted. The catalysed reaction is an L-alpha-amino acid + O2 + H2O = a 2-oxocarboxylate + H2O2 + NH4(+). It carries out the reaction L-leucine + O2 + H2O = 4-methyl-2-oxopentanoate + H2O2 + NH4(+). Catalyzes an oxidative deamination of predominantly hydrophobic and aromatic L-amino acids, thus producing hydrogen peroxide that may contribute to the diverse toxic effects of this enzyme. Shows activity on L-Leu. Exhibits diverse biological activities, such as apoptosis, and inhibition of agonist- and shear stress-induced platelet aggregation (SIPA). Effects of snake L-amino oxidases on platelets are controversial, since they either induce aggregation or inhibit agonist-induced aggregation. These different effects are probably due to different experimental conditions. This protein may also induce hemorrhage, hemolysis, edema, antibacterial and antiparasitic activities. The protein is L-amino-acid oxidase of Gloydius blomhoffii (Mamushi).